A 229-amino-acid chain; its full sequence is Peptide methionine sulfoxide reductase B3, chloroplastic (229 aa).

The transit peptide at 1–71 (MGVQHLLKLR…NHNQWAASRC (71 aa)) directs the protein to the chloroplast. The region spanning 102 to 223 (EEEWEAILSP…NSISLKFIPA (122 aa)) is the MsrB domain. Zn(2+) is bound by residues C141, C144, C187, and C190. C159 and C212 are disulfide-bonded. C212 serves as the catalytic Nucleophile.

It belongs to the MsrB Met sulfoxide reductase family. It depends on Zn(2+) as a cofactor.

Its subcellular location is the plastid. It localises to the chloroplast. It carries out the reaction L-methionyl-[protein] + [thioredoxin]-disulfide + H2O = L-methionyl-(R)-S-oxide-[protein] + [thioredoxin]-dithiol. In terms of biological role, catalyzes the reduction of methionine sulfoxide (MetSO) to methionine in proteins. Plays a protective role against oxidative stress by restoring activity to proteins that have been inactivated by methionine oxidation. MSRB family specifically reduces the MetSO R-enantiomer. This Oryza sativa subsp. japonica (Rice) protein is Peptide methionine sulfoxide reductase B3, chloroplastic (MSRB3).